The primary structure comprises 297 residues: PAK4-inhibitor INKA2 (297 aa).

Disordered stretches follow at residues 82–109, 175–200, and 234–285; these read GRGP…PSHR, LEKG…PQEL, and TPMV…LEHS. A compositionally biased stretch (low complexity) spans 92–102; it reads SPSSQPSLGSS. The tract at residues 137–180 is inka box; that stretch reads EPDDWTSTLMSRGRNRQPLVLGDNVFADLVGNWLDLPELEKGGE. Positions 244-253 are enriched in basic residues; that stretch reads RSQKVKKRSL.

Belongs to the INKA family. Interacts with PAK4.

It localises to the nucleus. Inhibitor of the serine/threonine-protein kinase PAK4. Acts by binding PAK4 in a substrate-like manner, inhibiting the protein kinase activity. The protein is PAK4-inhibitor INKA2 of Homo sapiens (Human).